Consider the following 372-residue polypeptide: 3-galactosyl-N-acetylglucosaminide 4-alpha-L-fucosyltransferase FUT3 (372 aa).

The Cytoplasmic segment spans residues 1-15; that stretch reads MDPLGAAKTQWPWRR. A helical; Signal-anchor for type II membrane protein transmembrane segment spans residues 16 to 34; it reads CLAALLFQLLVAVCFFSYL. Residues 35 to 372 are Lumenal-facing; that stretch reads RVSRDDATGS…MVRSIAAWFT (338 aa). The disordered stretch occupies residues 40–68; the sequence is DATGSPRPGLMAVEPVTGAPGGSSRQDTT. 2 N-linked (GlcNAc...) asparagine glycosylation sites follow: Asn-165 and Asn-196.

The protein belongs to the glycosyltransferase 10 family. Post-translationally, glycosylated.

The protein resides in the golgi apparatus. It localises to the golgi stack membrane. The enzyme catalyses a beta-D-galactosyl-(1-&gt;3)-N-acetyl-beta-D-glucosaminyl derivative + GDP-beta-L-fucose = a beta-D-galactosyl-(1-&gt;3)-[alpha-L-fucosyl-(1-&gt;4)]-N-acetyl-beta-D-glucosaminyl derivative + GDP + H(+). It catalyses the reaction an N-acetyl-alpha-neuraminyl-(2-&gt;3)-beta-D-galactosyl-(1-&gt;4)-N-acetyl-beta-D-glucosaminyl derivative + GDP-beta-L-fucose = an alpha-Neu5Ac-(2-&gt;3)-beta-D-Gal-(1-&gt;4)-[alpha-L-Fuc-(1-&gt;3)]-beta-D-GlcNAc derivative + GDP + H(+). It carries out the reaction a beta-D-galactosyl-(1-&gt;4)-N-acetyl-beta-D-glucosaminyl derivative + GDP-beta-L-fucose = a beta-D-galactosyl-(1-&gt;4)-[alpha-L-fucosyl-(1-&gt;3)]-N-acetyl-beta-D-glucosaminyl derivative + GDP + H(+). The catalysed reaction is an alpha-Neu5Ac-(2-&gt;3)-beta-D-Gal-(1-&gt;4)-beta-D-GlcNAc-(1-&gt;3)-beta-D-Gal-(1-&gt;4)-[alpha-L-Fuc-(1-&gt;3)]-beta-D-GlcNAc derivative + GDP-beta-L-fucose = an alpha-Neu5Ac-(2-&gt;3)-beta-D-Gal-(1-&gt;4)-[alpha-L-Fuc-(1-&gt;3)]-beta-D-GlcNAc-(1-&gt;3)-beta-D-Gal-(1-&gt;4)-[alpha-L-Fuc-(1-&gt;3)]-beta-D-GlcNAc derivative + GDP + H(+). The enzyme catalyses Lc4Cer + GDP-beta-L-fucose = a lactoside III(4)-a-Fuc-Lc4Cer + GDP + H(+). It catalyses the reaction a beta-D-Gal-(1-&gt;3)-beta-D-GlcNAc-(1-&gt;3)-beta-D-Gal-(1-&gt;4)-beta-D-Glc-(1&lt;-&gt;1')-Cer(d18:1(4E)) + GDP-beta-L-fucose = a III(4)-a-Fuc-Lc4Cer(d18:1(4E)) + GDP + H(+). It carries out the reaction N-acetyl-alpha-neuraminosyl-(2-&gt;3)-beta-D-galactosyl-(1-&gt;3)-[N-acetyl-alpha-neuraminosyl-(2-&gt;6)]-N-acetyl-beta-D-glucosaminyl-(1-&gt;3)-beta-D-galactosyl-(1-&gt;4)-beta-D-glucosyl-(1&lt;-&gt;1')-N-acyl-sphing-4-enine + GDP-beta-L-fucose = N-acetyl-alpha-neuraminosyl-(2-&gt;3)-beta-D-galactosyl-(1-&gt;3)-alpha-L-fucosyl-(1-&gt;4)-[N-acetyl-alpha-neuraminosyl-(2-&gt;6)-N-acetyl-beta-D-glucosaminyl-(1-&gt;3)]-beta-D-galactosyl-(1-&gt;4)-beta-D-glucosyl-(1&lt;-&gt;1')-N-acyl-sphing-4-enine + GDP + H(+). The catalysed reaction is N-acetyl-alpha-neuraminosyl-(2-&gt;3)-beta-D-galactosyl-(1-&gt;3)-N-acetyl-beta-D-glucosaminyl-(1-&gt;3)-beta-D-galactosyl-(1-&gt;4)-beta-D-glucosyl-(1&lt;-&gt;1')-N-acyl-sphing-4-enine + GDP-beta-L-fucose = N-acetyl-alpha-neuraminosyl-(2-&gt;3)-beta-D-galactosyl-(1-&gt;3)-alpha-L-fucosyl-(1-&gt;4)-[N-acetyl-beta-D-glucosaminyl-(1-&gt;3)]-beta-D-galactosyl-(1-&gt;4)-beta-D-glucosyl-(1&lt;-&gt;1')-N-acyl-sphing-4-enine + GDP + H(+). The enzyme catalyses beta-D-galactosyl-(1-&gt;3)-N-acetyl-D-glucosamine + GDP-beta-L-fucose = beta-D-galactosyl-(1-&gt;3)-[alpha-L-fucosyl-(1-&gt;4)]-N-acetyl-D-glucosamine + GDP + H(+). It catalyses the reaction alpha-L-Fuc-(1-&gt;2)-beta-D-Gal-(1-&gt;3)-D-GlcNAc + GDP-beta-L-fucose = alpha-L-Fuc-(1-&gt;2)-beta-D-Gal-(1-&gt;3)-[alpha-L-Fuc-(1-&gt;4)]-D-GlcNAc + GDP + H(+). It carries out the reaction alpha-L-Fuc-(1-&gt;2)-beta-D-Gal-(1-&gt;4)-D-GlcNAc + GDP-beta-L-fucose = alpha-L-Fuc-(1-&gt;2)-beta-D-Gal-(1-&gt;4)-[alpha-L-Fuc-(1-&gt;3)]-D-GlcNAc + GDP + H(+). The catalysed reaction is beta-D-galactosyl-(1-&gt;4)-N-acetyl-D-glucosamine + GDP-beta-L-fucose = beta-D-galactosyl-(1-&gt;4)-[alpha-L-fucosyl-(1-&gt;3)]-N-acetyl-D-glucosamine + GDP + H(+). The enzyme catalyses lactose + GDP-beta-L-fucose = beta-D-galactosyl-(1-&gt;4)-[alpha-L-fucosyl-(1-&gt;3)]-D-glucose + GDP + H(+). It catalyses the reaction an alpha-Neu5Ac-(2-&gt;3)-beta-D-Gal-(1-&gt;3)-D-GlcNAc derivative + GDP-beta-L-fucose = an alpha-Neu5Ac-(2-&gt;3)-beta-D-Gal-(1-&gt;3)-[alpha-L-Fuc-(1-&gt;4)]-beta-D-GlcNAc derivative + GDP + H(+). Its pathway is protein modification; protein glycosylation. Functionally, catalyzes the transfer of L-fucose, from a guanosine diphosphate-beta-L-fucose, to both the subterminal N-acetyl glucosamine (GlcNAc) of type 1 chain (beta-D-Gal-(1-&gt;3)-beta-D-GlcNAc) glycolipids and oligosaccharides via an alpha(1,4) linkage, and the subterminal glucose (Glc) or GlcNAc of type 2 chain (beta-D-Gal-(1-&gt;4)-beta-D-GlcNAc) oligosaccharides via an alpha(1,3) linkage, independently of the presence of terminal alpha-L-fucosyl-(1,2) moieties on the terminal galactose of these acceptors and participates in the blood groups Lewis determination and expression of Lewis a (Le(a)), lewis b (Le(b)), Lewis x/SSEA-1 (Le(x)) and lewis y (Le(y)) antigens. Also catalyzes the transfer of L-fucose to subterminal GlcNAc of sialyl- and disialyl-lactotetraosylceramide to produce sialyl Lewis a (sLe(a)) and disialyl Lewis a via an alpha(1,4) linkage and therefore may regulate cell surface sialyl Lewis a expression and consequently regulates adhesive properties to E-selectin, cell proliferation and migration. Catalyzes the transfer of an L-fucose to 3'-sialyl-N-acetyllactosamine by an alpha(1,3) linkage, which allows the formation of sialyl-Lewis x structure and therefore may regulate the sialyl-Lewis x surface antigen expression and consequently adhesive properties to E-selectin. Prefers type 1 chain over type 2 acceptors. Type 1 tetrasaccharide is a better acceptor than type 1 disaccharide suggesting that a beta anomeric configuration of GlcNAc in the substrate is preferred. Lewis-positive (Le(+)) individuals have an active enzyme while Lewis-negative (Le(-)) individuals have an inactive enzyme. This Pongo pygmaeus (Bornean orangutan) protein is 3-galactosyl-N-acetylglucosaminide 4-alpha-L-fucosyltransferase FUT3.